Here is a 201-residue protein sequence, read N- to C-terminus: dCTP deaminase, dUMP-forming (201 aa).

Residues 117-122, aspartate 135, 143-145, glutamine 163, tyrosine 177, and glutamine 188 each bind dCTP; these read RSSFGR and TLE. The active-site Proton donor/acceptor is glutamate 145.

The protein belongs to the dCTP deaminase family. As to quaternary structure, homotrimer.

The catalysed reaction is dCTP + 2 H2O = dUMP + NH4(+) + diphosphate. The protein operates within pyrimidine metabolism; dUMP biosynthesis; dUMP from dCTP: step 1/1. Functionally, bifunctional enzyme that catalyzes both the deamination of dCTP to dUTP and the hydrolysis of dUTP to dUMP without releasing the toxic dUTP intermediate. This is dCTP deaminase, dUMP-forming from Methanococcus aeolicus (strain ATCC BAA-1280 / DSM 17508 / OCM 812 / Nankai-3).